A 345-amino-acid polypeptide reads, in one-letter code: D-fructose 1,6-bisphosphatase class 2/sedoheptulose 1,7-bisphosphatase (345 aa).

Asp-33, Glu-57, Asp-97, and Glu-100 together coordinate Mn(2+). Substrate contacts are provided by residues Glu-100–Thr-102, Tyr-131, Arg-176–Arg-178, and Asp-198–Asp-200. Glu-225 contributes to the Mn(2+) binding site.

Belongs to the FBPase class 2 family. Homotetramer. Mn(2+) serves as cofactor.

It carries out the reaction beta-D-fructose 1,6-bisphosphate + H2O = beta-D-fructose 6-phosphate + phosphate. The enzyme catalyses D-sedoheptulose 1,7-bisphosphate + H2O = D-sedoheptulose 7-phosphate + phosphate. It functions in the pathway carbohydrate biosynthesis; Calvin cycle. Catalyzes the hydrolysis of fructose 1,6-bisphosphate (Fru 1,6-P2) and sedoheptulose 1,7-bisphosphate (Sed 1,7-P2) to fructose 6-phosphate and sedoheptulose 7-phosphate, respectively. This Microcystis aeruginosa (strain NIES-843 / IAM M-2473) protein is D-fructose 1,6-bisphosphatase class 2/sedoheptulose 1,7-bisphosphatase.